Here is a 146-residue protein sequence, read N- to C-terminus: 3-dehydroquinate dehydratase (146 aa).

Tyr24 serves as the catalytic Proton acceptor. Residues Asn75, His81, and Asp88 each coordinate substrate. His101 serves as the catalytic Proton donor. Substrate contacts are provided by residues 102 to 103 and Arg112; that span reads LS.

The protein belongs to the type-II 3-dehydroquinase family. In terms of assembly, homododecamer.

The enzyme catalyses 3-dehydroquinate = 3-dehydroshikimate + H2O. It participates in metabolic intermediate biosynthesis; chorismate biosynthesis; chorismate from D-erythrose 4-phosphate and phosphoenolpyruvate: step 3/7. Its function is as follows. Catalyzes a trans-dehydration via an enolate intermediate. The polypeptide is 3-dehydroquinate dehydratase (Caulobacter vibrioides (strain ATCC 19089 / CIP 103742 / CB 15) (Caulobacter crescentus)).